Here is a 98-residue protein sequence, read N- to C-terminus: NADH-ubiquinone oxidoreductase chain 4L (98 aa).

3 helical membrane-spanning segments follow: residues Met1–Met21, Ser29–Leu49, and Leu61–Ile81.

The protein belongs to the complex I subunit 4L family. As to quaternary structure, core subunit of respiratory chain NADH dehydrogenase (Complex I) which is composed of 45 different subunits.

Its subcellular location is the mitochondrion inner membrane. It catalyses the reaction a ubiquinone + NADH + 5 H(+)(in) = a ubiquinol + NAD(+) + 4 H(+)(out). Core subunit of the mitochondrial membrane respiratory chain NADH dehydrogenase (Complex I) which catalyzes electron transfer from NADH through the respiratory chain, using ubiquinone as an electron acceptor. Part of the enzyme membrane arm which is embedded in the lipid bilayer and involved in proton translocation. The sequence is that of NADH-ubiquinone oxidoreductase chain 4L (MT-ND4L) from Elephas maximus (Indian elephant).